The following is a 203-amino-acid chain: Corrinoid adenosyltransferase (203 aa).

The segment at 1–21 is disordered; it reads MNESPEKDQRHRERMERKKAV. 41–47 lines the ATP pocket; that stretch reads GNGKGKS.

The protein belongs to the Cob(I)alamin adenosyltransferase family. Monomer. The cofactor is Mn(2+).

It is found in the cytoplasm. The enzyme catalyses 2 cob(II)yrinate a,c diamide + reduced [electron-transfer flavoprotein] + 2 ATP = 2 adenosylcob(III)yrinate a,c-diamide + 2 triphosphate + oxidized [electron-transfer flavoprotein] + 3 H(+). It carries out the reaction 2 cob(II)alamin + reduced [electron-transfer flavoprotein] + 2 ATP = 2 adenosylcob(III)alamin + 2 triphosphate + oxidized [electron-transfer flavoprotein] + 3 H(+). Its pathway is cofactor biosynthesis; adenosylcobalamin biosynthesis; adenosylcobalamin from cob(II)yrinate a,c-diamide: step 2/7. In terms of biological role, required for both de novo synthesis of the corrin ring for the assimilation of exogenous corrinoids. Participates in the adenosylation of a variety of incomplete and complete corrinoids. The protein is Corrinoid adenosyltransferase (cobO) of Pseudomonas aeruginosa (strain ATCC 15692 / DSM 22644 / CIP 104116 / JCM 14847 / LMG 12228 / 1C / PRS 101 / PAO1).